A 357-amino-acid polypeptide reads, in one-letter code: Elongation factor Ts (357 aa).

The interval 82-85 (TDFV) is involved in Mg(2+) ion dislocation from EF-Tu.

This sequence belongs to the EF-Ts family.

The protein resides in the cytoplasm. Associates with the EF-Tu.GDP complex and induces the exchange of GDP to GTP. It remains bound to the aminoacyl-tRNA.EF-Tu.GTP complex up to the GTP hydrolysis stage on the ribosome. This chain is Elongation factor Ts, found in Campylobacter jejuni subsp. jejuni serotype O:23/36 (strain 81-176).